A 767-amino-acid polypeptide reads, in one-letter code: Polyribonucleotide nucleotidyltransferase (767 aa).

The Mg(2+) site is built by aspartate 488 and aspartate 494. A KH domain is found at 555–614 (PRLYTMKINPEKIRDVIGKGGSVIRALTEETGCQIDIGEDGTITIASTDADKAELAKKRI). The 69-residue stretch at 624 to 692 (GKVYEGPVVK…EKGRIKLSMK (69 aa)) folds into the S1 motif domain. Basic and acidic residues predominate over residues 700-742 (GMEFEERAPRREGGFGDRGDRGDRGPRRDRGGDRPERGERPAR). The segment at 700–767 (GMEFEERAPR…QPQQQQGQQQ (68 aa)) is disordered. Low complexity predominate over residues 752–767 (GAPAAGQPQQQQGQQQ).

Belongs to the polyribonucleotide nucleotidyltransferase family. Mg(2+) serves as cofactor.

The protein resides in the cytoplasm. It carries out the reaction RNA(n+1) + phosphate = RNA(n) + a ribonucleoside 5'-diphosphate. Its function is as follows. Involved in mRNA degradation. Catalyzes the phosphorolysis of single-stranded polyribonucleotides processively in the 3'- to 5'-direction. In Leptothrix cholodnii (strain ATCC 51168 / LMG 8142 / SP-6) (Leptothrix discophora (strain SP-6)), this protein is Polyribonucleotide nucleotidyltransferase.